The primary structure comprises 245 residues: Folate receptor gamma (245 aa).

The first 22 residues, 1–22 (MDMAWQMMQLLLLALVTAAGSA), serve as a signal peptide directing secretion. Disulfide bonds link Cys37-Cys65, Cys57-Cys105, Cys66-Cys109, Cys89-Cys175, Cys96-Cys146, Cys135-Cys209, Cys139-Cys189, and Cys152-Cys169. 2 residues coordinate folate: Asp103 and Tyr107. Residue Asn121 is glycosylated (N-linked (GlcNAc...) asparagine). Folate is bound by residues 124-128 (WRKER), 157-162 (HKGWNW), and Ser196. Asn161 is a glycosylation site (N-linked (GlcNAc...) asparagine). Asn201 is a glycosylation site (N-linked (GlcNAc...) asparagine).

The protein belongs to the folate receptor family. As to expression, spleen, thymus, bone marrow, ovarian carcinoma, and uterine carcinoma.

The protein resides in the secreted. Functionally, binds to folate and reduced folic acid derivatives and mediates delivery of 5-methyltetrahydrofolate to the interior of cells. Isoform Short does not bind folate. This chain is Folate receptor gamma (FOLR3), found in Homo sapiens (Human).